The following is a 130-amino-acid chain: Small ribosomal subunit protein uS9 (130 aa).

Residues 98–130 (LKRAGFLTRDARKKERKKYGQPGARKRFQYSKR) are disordered. Over residues 111–130 (KERKKYGQPGARKRFQYSKR) the composition is skewed to basic residues.

The protein belongs to the universal ribosomal protein uS9 family.

This chain is Small ribosomal subunit protein uS9, found in Sorangium cellulosum (strain So ce56) (Polyangium cellulosum (strain So ce56)).